Reading from the N-terminus, the 194-residue chain is H-N-H endonuclease F-TflI (194 aa).

Its function is as follows. Endonuclease that cleaves only one strand of asymmetric DNA substrates thereby introducing interruptions into the template or coding strand. The protein is H-N-H endonuclease F-TflI of Escherichia coli (Enterobacteria phage T5).